Consider the following 279-residue polypeptide: NAD-dependent protein deacylase (279 aa).

Residues 20-272 form the Deacetylase sirtuin-type domain; sequence RERLRQRIFF…PEFVEKLLKG (253 aa). 48 to 67 provides a ligand contact to NAD(+); it reads GAGISAESGIRTFRAADGLW. Substrate is bound by residues Tyr-92 and Arg-95. 129–132 contacts NAD(+); sequence QNID. Residue His-147 is the Proton acceptor of the active site. Cys-155 and Cys-174 together coordinate Zn(2+). Residues 214 to 216, 240 to 242, and Ala-258 contribute to the NAD(+) site; these read GTS and NLE.

Belongs to the sirtuin family. Class III subfamily. Forms a 1:1 complex with acetyl-CoA synthetase (Acs). Zn(2+) is required as a cofactor.

It is found in the cytoplasm. It carries out the reaction N(6)-acetyl-L-lysyl-[protein] + NAD(+) + H2O = 2''-O-acetyl-ADP-D-ribose + nicotinamide + L-lysyl-[protein]. It catalyses the reaction N(6)-succinyl-L-lysyl-[protein] + NAD(+) + H2O = 2''-O-succinyl-ADP-D-ribose + nicotinamide + L-lysyl-[protein]. The enzyme catalyses N(6)-(2-hydroxyisobutanoyl)-L-lysyl-[protein] + NAD(+) + H2O = 2''-O-(2-hydroxyisobutanoyl)-ADP-D-ribose + nicotinamide + L-lysyl-[protein]. Its activity is regulated as follows. Deacetylation is inhibited by nicotinamide. Functionally, NAD-dependent lysine deacetylase that specifically removes acetyl groups on target proteins. Also acts as a protein-lysine deacylase by mediating protein desuccinylation and de-2-hydroxyisobutyrylation. Modulates the activities of several proteins which are inactive in their acylated form. Activates the enzyme acetyl-CoA synthetase (acs) by deacetylating 'Lys-609' in the inactive, acetylated form of the enzyme. May also modulate the activity of other propionyl-adenosine monophosphate (AMP)-forming enzymes. The sequence is that of NAD-dependent protein deacylase from Escherichia coli (strain K12).